A 91-amino-acid polypeptide reads, in one-letter code: MTRSAKKGPFCDAHLLKKVEAAVGGKDKKPIKTWSRRSTIMPEFIGLTIAVHNGRQHVPVYVTENMVGHKLGEFALTRTFKGHAADKKAKR.

This sequence belongs to the universal ribosomal protein uS19 family.

In terms of biological role, protein S19 forms a complex with S13 that binds strongly to the 16S ribosomal RNA. This chain is Small ribosomal subunit protein uS19, found in Cupriavidus pinatubonensis (strain JMP 134 / LMG 1197) (Cupriavidus necator (strain JMP 134)).